Here is a 126-residue protein sequence, read N- to C-terminus: Fluoride-specific ion channel FluC (126 aa).

4 helical membrane passes run 7 to 24 (LWVS…YFLS), 35 to 55 (FPWG…LFLV), 69 to 89 (LLIA…AYES), and 98 to 118 (WGLF…AVLG). Na(+)-binding residues include Gly-77 and Thr-80.

Belongs to the fluoride channel Fluc/FEX (TC 1.A.43) family.

The protein resides in the cell inner membrane. The enzyme catalyses fluoride(in) = fluoride(out). Na(+) is not transported, but it plays an essential structural role and its presence is essential for fluoride channel function. Its function is as follows. Fluoride-specific ion channel. Important for reducing fluoride concentration in the cell, thus reducing its toxicity. In Koribacter versatilis (strain Ellin345), this protein is Fluoride-specific ion channel FluC.